The following is a 206-amino-acid chain: Insecticyanin-B (206 aa).

Positions 1 to 17 (MQRFLVFTIVAVATAAA) are cleaved as a signal peptide. Cystine bridges form between C26–C136 and C60–C192.

This sequence belongs to the calycin superfamily. Lipocalin family. Homotetramer. As to expression, synthesized only in the caterpillars, apparently by the epidermis and secreted into the hemolymph. The protein is passed over from the larval hemolymph to that of pupae and adults and is sequestered in the eggs.

The protein localises to the secreted. In terms of biological role, this protein binds a chromophore: biliverdin IX, isomer gamma. Mixed with lipoprotein-bound carotenes, this blue protein provides hornworms with their green cryptic coloration which serves a camouflage. The sequence is that of Insecticyanin-B (INSB) from Manduca sexta (Tobacco hawkmoth).